A 160-amino-acid polypeptide reads, in one-letter code: SsrA-binding protein (160 aa).

The segment at 131 to 160 (KKEYDKRHTERERDSDRELQRAVRSKGKDD) is disordered.

This sequence belongs to the SmpB family.

The protein localises to the cytoplasm. Its function is as follows. Required for rescue of stalled ribosomes mediated by trans-translation. Binds to transfer-messenger RNA (tmRNA), required for stable association of tmRNA with ribosomes. tmRNA and SmpB together mimic tRNA shape, replacing the anticodon stem-loop with SmpB. tmRNA is encoded by the ssrA gene; the 2 termini fold to resemble tRNA(Ala) and it encodes a 'tag peptide', a short internal open reading frame. During trans-translation Ala-aminoacylated tmRNA acts like a tRNA, entering the A-site of stalled ribosomes, displacing the stalled mRNA. The ribosome then switches to translate the ORF on the tmRNA; the nascent peptide is terminated with the 'tag peptide' encoded by the tmRNA and targeted for degradation. The ribosome is freed to recommence translation, which seems to be the essential function of trans-translation. The chain is SsrA-binding protein from Pseudomonas syringae pv. syringae (strain B728a).